The sequence spans 352 residues: D-arabitol-phosphate dehydrogenase (352 aa).

Mn(2+) contacts are provided by Cys43, His65, Cys96, Cys99, Cys102, Cys110, and Glu151.

This sequence belongs to the zinc-containing alcohol dehydrogenase family. As to quaternary structure, homotetramer. Mn(2+) is required as a cofactor.

It carries out the reaction D-arabinitol 1-phosphate + NAD(+) = D-xylulose 5-phosphate + NADH + H(+). Its activity is regulated as follows. Inhibited by EDTA, 4-hydroxymercuribenzoic acid (PHMB), mercury and zinc ions at a concentration of 2 mM. Involved in the arabitol catabolism via the arabitol phosphate route. Catalyzes only the transformation of D-arabitol 1-phosphate (Arb1P) and D-arabitol 5-phosphate (Arb5P) into D-xylulose 5-phosphate (Xlu5P) and ribulose 5-phosphate, respectively. It can use both NAD and NADP. The sequence is that of D-arabitol-phosphate dehydrogenase from Enterococcus avium (Streptococcus avium).